The following is a 565-amino-acid chain: Oxygen-dependent choline dehydrogenase (565 aa).

7–36 (DYIICGAGSAGNVLATRLTEDPGVTVLLLE) contacts FAD. Catalysis depends on His474, which acts as the Proton acceptor.

This sequence belongs to the GMC oxidoreductase family. FAD serves as cofactor.

It carries out the reaction choline + A = betaine aldehyde + AH2. The catalysed reaction is betaine aldehyde + NAD(+) + H2O = glycine betaine + NADH + 2 H(+). It participates in amine and polyamine biosynthesis; betaine biosynthesis via choline pathway; betaine aldehyde from choline (cytochrome c reductase route): step 1/1. Its function is as follows. Involved in the biosynthesis of the osmoprotectant glycine betaine. Catalyzes the oxidation of choline to betaine aldehyde and betaine aldehyde to glycine betaine at the same rate. This is Oxygen-dependent choline dehydrogenase from Burkholderia pseudomallei (strain K96243).